The following is a 471-amino-acid chain: ATP synthase subunit beta (471 aa).

156–163 (GGAGVGKT) contacts ATP.

Belongs to the ATPase alpha/beta chains family. In terms of assembly, F-type ATPases have 2 components, CF(1) - the catalytic core - and CF(0) - the membrane proton channel. CF(1) has five subunits: alpha(3), beta(3), gamma(1), delta(1), epsilon(1). CF(0) has three main subunits: a(1), b(2) and c(9-12). The alpha and beta chains form an alternating ring which encloses part of the gamma chain. CF(1) is attached to CF(0) by a central stalk formed by the gamma and epsilon chains, while a peripheral stalk is formed by the delta and b chains.

It localises to the cell inner membrane. It carries out the reaction ATP + H2O + 4 H(+)(in) = ADP + phosphate + 5 H(+)(out). Its function is as follows. Produces ATP from ADP in the presence of a proton gradient across the membrane. The catalytic sites are hosted primarily by the beta subunits. The protein is ATP synthase subunit beta of Nitratidesulfovibrio vulgaris (strain DSM 19637 / Miyazaki F) (Desulfovibrio vulgaris).